Here is a 314-residue protein sequence, read N- to C-terminus: uncharacterized protein (314 aa).

A signal peptide spans 1 to 24; the sequence is MKRRRRWRGWLLFPALCFCLLCEA. N-linked (GlcNAc...) asparagine; by host glycosylation is found at asparagine 28, asparagine 43, asparagine 57, asparagine 77, asparagine 101, asparagine 102, asparagine 109, asparagine 151, asparagine 170, asparagine 217, asparagine 223, asparagine 252, asparagine 255, and asparagine 268. The segment covering 47–114 has biased composition (low complexity); sequence ATTGTTTTSP…TIGTNATSPS (68 aa). The segment at 47 to 116 is disordered; that stretch reads ATTGTTTTSP…GTNATSPSPS (70 aa).

It belongs to the HHV-5 UL116 protein family. In terms of assembly, interacts with gH. Interacts with UL148. Highly glycosylated.

The protein localises to the virion. It is found in the host endoplasmic reticulum. In terms of biological role, chaperone protein that cooperates with UL148 to regulate the abundance of gH complexes in virion. First interactor of gH in the host endoplasmic reticulum, regulates the early folding steps of virion assembly. Then, UL148 is recruited and favors the binding of gL. This is an uncharacterized protein from Homo sapiens (Human).